The primary structure comprises 304 residues: Uricase (304 aa).

Alanine 2 bears the N-acetylalanine mark. An N6-acetyllysine; alternate mark is found at lysine 10 and lysine 23. Lysine 10 and lysine 23 each carry N6-succinyllysine; alternate. The active-site Charge relay system is lysine 23. Residues lysine 27 and lysine 36 each carry the N6-acetyllysine modification. Serine 39 and serine 63 each carry phosphoserine. The active-site Charge relay system is the threonine 68. Residues threonine 68 and aspartate 69 each contribute to the urate site. Residues lysine 118, lysine 122, and lysine 164 each carry the N6-acetyllysine modification. Phenylalanine 170 is a binding site for urate. Residues lysine 175 and lysine 185 each carry the N6-acetyllysine modification. A urate-binding site is contributed by arginine 187. Lysine 221 and lysine 228 each carry N6-acetyllysine; alternate. An N6-succinyllysine; alternate mark is found at lysine 221 and lysine 228. Phosphoserine is present on serine 232. Valine 235, glutamine 236, and asparagine 262 together coordinate urate. Histidine 264 (charge relay system) is an active-site residue. Lysine 278 is subject to N6-acetyllysine. Tyrosine 289 is subject to Phosphotyrosine. The Microbody targeting signal motif lies at 302 to 304 (SRL).

Belongs to the uricase family.

It localises to the peroxisome. The catalysed reaction is urate + O2 + H2O = 5-hydroxyisourate + H2O2. The protein operates within purine metabolism; urate degradation; (S)-allantoin from urate: step 1/3. Catalyzes the oxidation of uric acid to 5-hydroxyisourate, which is further processed to form (S)-allantoin. The chain is Uricase (UOX) from Macaca fascicularis (Crab-eating macaque).